The chain runs to 131 residues: MDEELQAIRQARLAQLQAEHGSAPSNIASGPSSNQQQQEVQDEMRQNLLSQILEHPARDRLRRIALVRKDRAEAVEELLLRMAKTGQISHKISEPELIELLEKISGEVSKRNETKIVINRRVQDDEDDWDL.

The tract at residues 15-43 (QLQAEHGSAPSNIASGPSSNQQQQEVQDE) is disordered. The segment covering 23-34 (APSNIASGPSSN) has biased composition (polar residues).

Belongs to the PDCD5 family.

This is an uncharacterized protein from Schizosaccharomyces pombe (strain 972 / ATCC 24843) (Fission yeast).